The sequence spans 530 residues: RNA-binding protein 39 (530 aa).

The segment at 1–146 (MADDIDIEAM…PVREPIDNLT (146 aa)) is disordered. Ala2 bears the N-acetylalanine mark. The segment covering 14-32 (PYKKDENKLSSANGHEERS) has biased composition (basic and acidic residues). Composition is skewed to basic residues over residues 33–56 (KKRK…KERK) and 64–95 (KKSK…RGRY). A Phosphotyrosine modification is found at Tyr95. Phosphoserine is present on residues Ser97 and Ser100. A Glycyl lysine isopeptide (Lys-Gly) (interchain with G-Cter in SUMO2) cross-link involves residue Lys111. Phosphoserine is present on Ser117. Lys119 participates in a covalent cross-link: Glycyl lysine isopeptide (Lys-Gly) (interchain with G-Cter in SUMO2). Positions 119–130 (KLSRRRSRSKSP) are enriched in basic residues. 2 positions are modified to phosphoserine: Ser121 and Ser136. Residues 131–146 (FRKDKSPVREPIDNLT) are compositionally biased toward basic and acidic residues. Phosphothreonine is present on Thr146. The RRM 1 domain occupies 153–230 (RTVFCMQLAA…VPIIVQASQA (78 aa)). Lys244 participates in a covalent cross-link: Glycyl lysine isopeptide (Lys-Gly) (interchain with G-Cter in SUMO2). The RRM 2 domain maps to 250 to 328 (MRLYVGSLHF…RPMKVGHVTE (79 aa)). Residues 291–355 (KGYGFITFSD…RTGIDLGTTG (65 aa)) form an activating domain region. The segment at 291–406 (KGYGFITFSD…IDLQTRLSQQ (116 aa)) is interaction with JUN. 3 positions are modified to phosphoserine: Ser334, Ser337, and Ser341. Positions 355–406 (GRLQLMARLAEGTGLQIPPAAQQALQMSGSLAFGAVAEFSFVIDLQTRLSQQ) are interaction with ESR1 and ESR2. The interaction with NCOA6 stretch occupies residues 406 to 530 (QTEASALAAA…ATQLLVPSRR (125 aa)). The 64-residue stretch at 445 to 508 (EIKDDVIEEC…KMITAAYVPL (64 aa)) folds into the RRM 3 domain.

It belongs to the splicing factor SR family. Interacts with NCOA6 and JUN. Interacts with ESR1 and ESR2, in the presence of estradiol (E2). Interacts with RSRC1 (via Arg/Ser-rich domain). Interacts with SF3B1. Interacts with ZNF106 (via N-terminus). Post-translationally, aryl sulfonamide anticancer drugs, such as indisulam (E7070) or E7820, promote ubiquitination and subsequent degradation by the DCX(DCAF15) complex. RBM39 degradation results in splicing defects and death in cancer cell lines. Aryl sulfonamide anticancer drugs change the substrate specificity of DCAF15 by acting as a molecular glue that promotes binding between DCAF15 and weak affinity interactor RBM39. As to expression, widely expressed. Highly expressed in pancreas, skeletal muscle, lung and brain. Expressed at intermediate level in kidney, liver and heart.

Its subcellular location is the nucleus speckle. Functionally, RNA-binding protein that acts as a pre-mRNA splicing factor. Acts by promoting exon inclusion via regulation of exon cassette splicing. Also acts as a transcriptional coactivator for steroid nuclear receptors ESR1/ER-alpha and ESR2/ER-beta, and JUN/AP-1, independently of the pre-mRNA splicing factor activity. The protein is RNA-binding protein 39 of Homo sapiens (Human).